The chain runs to 253 residues: Sulfate transporter CysZ (253 aa).

Transmembrane regions (helical) follow at residues 31-51, 75-95, 151-171, and 222-242; these read FVIL…WWLF, LLWP…FSTI, IVLL…PVLW, and IPLL…AMWV.

Belongs to the CysZ family.

It localises to the cell inner membrane. In terms of biological role, high affinity, high specificity proton-dependent sulfate transporter, which mediates sulfate uptake. Provides the sulfur source for the cysteine synthesis pathway. This Escherichia coli O127:H6 (strain E2348/69 / EPEC) protein is Sulfate transporter CysZ.